The primary structure comprises 829 residues: Leucine--tRNA ligase (829 aa).

A 'HIGH' region motif is present at residues proline 42–histidine 52. Positions lysine 582–serine 586 match the 'KMSKS' region motif. Position 585 (lysine 585) interacts with ATP.

It belongs to the class-I aminoacyl-tRNA synthetase family.

The protein resides in the cytoplasm. The catalysed reaction is tRNA(Leu) + L-leucine + ATP = L-leucyl-tRNA(Leu) + AMP + diphosphate. This Moorella thermoacetica (strain ATCC 39073 / JCM 9320) protein is Leucine--tRNA ligase.